The chain runs to 307 residues: Elongation factor Ts (307 aa).

The interval 80-83 is involved in Mg(2+) ion dislocation from EF-Tu; the sequence is TDFV.

This sequence belongs to the EF-Ts family.

Its subcellular location is the cytoplasm. In terms of biological role, associates with the EF-Tu.GDP complex and induces the exchange of GDP to GTP. It remains bound to the aminoacyl-tRNA.EF-Tu.GTP complex up to the GTP hydrolysis stage on the ribosome. The chain is Elongation factor Ts from Azorhizobium caulinodans (strain ATCC 43989 / DSM 5975 / JCM 20966 / LMG 6465 / NBRC 14845 / NCIMB 13405 / ORS 571).